Reading from the N-terminus, the 328-residue chain is Mannitol-1-phosphate 5-dehydrogenase (328 aa).

Residue 3-14 (LIHFGAGNIGCG) coordinates NAD(+).

Belongs to the mannitol dehydrogenase family.

It carries out the reaction D-mannitol 1-phosphate + NAD(+) = beta-D-fructose 6-phosphate + NADH + H(+). This is Mannitol-1-phosphate 5-dehydrogenase (mtlD) from Mycoplasma mycoides subsp. mycoides SC (strain CCUG 32753 / NCTC 10114 / PG1).